The sequence spans 278 residues: Sulfur carrier protein FdhD (278 aa).

Residue Cys121 is the Cysteine persulfide intermediate of the active site. 260–265 (FCKPGR) contributes to the Mo-bis(molybdopterin guanine dinucleotide) binding site.

Belongs to the FdhD family.

It localises to the cytoplasm. In terms of biological role, required for formate dehydrogenase (FDH) activity. Acts as a sulfur carrier protein that transfers sulfur from IscS to the molybdenum cofactor prior to its insertion into FDH. The protein is Sulfur carrier protein FdhD of Salmonella heidelberg (strain SL476).